The primary structure comprises 191 residues: MSTREGASQNRTAPDLKPIETCRKLLKSREFLSVRYIIQVNQLLKSKRHDDDDQFEQVEAICDLLIAAENRLPNGLKDYYGMIRANRFGPVLLEDFEKLTKLLDKKHNYFPFSQEAADKASLAWSLLSKPPIKAHYDLAISAFFGECSKVKRKIFIPKKQIEVVVISDDDDEEEYGHKIISMARTARGCRS.

This is an uncharacterized protein from Arabidopsis thaliana (Mouse-ear cress).